Reading from the N-terminus, the 326-residue chain is MEFTTIVVILLVIACIVVLFFIGSSISLWVQSLVSGARVGLLNIVFMRFRKVPPKLIVTSKIMAVKSGLEISTDDFESHYLAGGDVSRVVKALIAADKANIDLPFNRAAAIDLAGRNVLEAVQMSVNPKVIETPLIAAMAKDGIQLKAISRVTVRANIDRLVGGAGEETILARVGEGIVTTIGSANSHKMVLENPDLISKTVLSKGLDSGTAYEILSIDIADVDVGKNIGAELETDRAEADKKIAQAKAEERRAMAYAMEQEMKARVQEMRAKVVEAEAQVPLAMAEAFRQGNLGIMDYYRMKNIVSDTDMRQSIATPEKDDPDQP.

Residues 3 to 23 (FTTIVVILLVIACIVVLFFIG) traverse the membrane as a helical segment.

This sequence belongs to the flotillin-like FloA family. Homooligomerizes.

Its subcellular location is the cell membrane. The protein localises to the membrane raft. Found in functional membrane microdomains (FMM) that may be equivalent to eukaryotic membrane rafts. FMMs are highly dynamic and increase in number as cells age. Flotillins are thought to be important factors in membrane fluidity. This Desulforapulum autotrophicum (strain ATCC 43914 / DSM 3382 / VKM B-1955 / HRM2) (Desulfobacterium autotrophicum) protein is Flotillin-like protein FloA.